The sequence spans 447 residues: UDP-glycosyltransferase 76E5 (447 aa).

Residues Ser272, Ala324–Gln326, His341–Glu349, and Asn363–Gln366 each bind UDP-alpha-D-glucose.

Belongs to the UDP-glycosyltransferase family.

The chain is UDP-glycosyltransferase 76E5 (UGT76E5) from Arabidopsis thaliana (Mouse-ear cress).